We begin with the raw amino-acid sequence, 261 residues long: Pyridoxine-5'-phosphate oxidase (261 aa).

Pyridoxal 5'-phosphate is bound at residue 42–45 (RGDR). 95 to 98 (RMLL) is an FMN binding site. Position 100 (lysine 100) interacts with pyridoxal 5'-phosphate. FMN is bound by residues 110–111 (FT), 116–117 (RK), and glutamine 139. Pyridoxal 5'-phosphate-binding residues include tyrosine 157, arginine 161, and serine 165. Residues 174–175 (QS) and tryptophan 219 contribute to the FMN site. Position 225–227 (225–227 (RLH)) interacts with pyridoxal 5'-phosphate. Residue arginine 229 coordinates FMN. Threonine 238 carries the phosphothreonine modification. Serine 241 carries the phosphoserine modification.

The protein belongs to the pyridoxamine 5'-phosphate oxidase family. In terms of assembly, homodimer. Requires FMN as cofactor. Detected in adult liver.

It catalyses the reaction pyridoxamine 5'-phosphate + O2 + H2O = pyridoxal 5'-phosphate + H2O2 + NH4(+). It carries out the reaction pyridoxine 5'-phosphate + O2 = pyridoxal 5'-phosphate + H2O2. The protein operates within cofactor metabolism; pyridoxal 5'-phosphate salvage; pyridoxal 5'-phosphate from pyridoxamine 5'-phosphate: step 1/1. It participates in cofactor metabolism; pyridoxal 5'-phosphate salvage; pyridoxal 5'-phosphate from pyridoxine 5'-phosphate: step 1/1. Functionally, catalyzes the oxidation of either pyridoxine 5'-phosphate (PNP) or pyridoxamine 5'-phosphate (PMP) into pyridoxal 5'-phosphate (PLP). In Rattus norvegicus (Rat), this protein is Pyridoxine-5'-phosphate oxidase (Pnpo).